Reading from the N-terminus, the 140-residue chain is MADGRPATLDDFCRRFDISFFDLRLTCIFCSHTVDLADLALFYLKKLSLVFRGNCYYACCSECLRLSALFEQENYFQCSIKAVHLEEIAQKKIKEICIRCICCLRLLDIVEKLDLLYSDETCYLIRGLWRGYCRNCIRKQ.

Zinc fingers lie at residues 27 to 63 (CIFCSHTVDLADLALFYLKKLSLVFRGNCYYACCSEC) and 100 to 136 (CICCLRLLDIVEKLDLLYSDETCYLIRGLWRGYCRNC).

This sequence belongs to the papillomaviridae E6 protein family. Forms homodimers. Interacts with ubiquitin-protein ligase UBE3A/E6-AP; this interaction stimulates UBE3A ubiquitin activity. Interacts with host BAK1.

The protein localises to the host cytoplasm. The protein resides in the host nucleus. Its function is as follows. Plays a major role in the induction and maintenance of cellular transformation. E6 associates with host UBE3A/E6-AP ubiquitin-protein ligase and modulates its activity. Protects host keratinocytes from apoptosis by mediating the degradation of host BAK1. May also inhibit host immune response. This is Protein E6 from Human papillomavirus 4.